Consider the following 277-residue polypeptide: Sulfur carrier protein FdhD (277 aa).

C121 acts as the Cysteine persulfide intermediate in catalysis. 260-265 provides a ligand contact to Mo-bis(molybdopterin guanine dinucleotide); it reads FCKPGR.

This sequence belongs to the FdhD family.

It is found in the cytoplasm. In terms of biological role, required for formate dehydrogenase (FDH) activity. Acts as a sulfur carrier protein that transfers sulfur from IscS to the molybdenum cofactor prior to its insertion into FDH. The chain is Sulfur carrier protein FdhD from Shigella flexneri serotype 5b (strain 8401).